The primary structure comprises 170 residues: Acireductone dioxygenase (170 aa).

Positions 99, 101, 105, and 144 each coordinate Fe(2+). Ni(2+) is bound by residues His99, His101, Glu105, and His144.

The protein belongs to the acireductone dioxygenase (ARD) family. In terms of assembly, monomer. Fe(2+) is required as a cofactor. It depends on Ni(2+) as a cofactor.

It carries out the reaction 1,2-dihydroxy-5-(methylsulfanyl)pent-1-en-3-one + O2 = 3-(methylsulfanyl)propanoate + CO + formate + 2 H(+). It catalyses the reaction 1,2-dihydroxy-5-(methylsulfanyl)pent-1-en-3-one + O2 = 4-methylsulfanyl-2-oxobutanoate + formate + 2 H(+). It functions in the pathway amino-acid biosynthesis; L-methionine biosynthesis via salvage pathway; L-methionine from S-methyl-5-thio-alpha-D-ribose 1-phosphate: step 5/6. In terms of biological role, catalyzes 2 different reactions between oxygen and the acireductone 1,2-dihydroxy-3-keto-5-methylthiopentene (DHK-MTPene) depending upon the metal bound in the active site. Fe-containing acireductone dioxygenase (Fe-ARD) produces formate and 2-keto-4-methylthiobutyrate (KMTB), the alpha-ketoacid precursor of methionine in the methionine recycle pathway. Ni-containing acireductone dioxygenase (Ni-ARD) produces methylthiopropionate, carbon monoxide and formate, and does not lie on the methionine recycle pathway. The polypeptide is Acireductone dioxygenase (Bacillus thuringiensis subsp. konkukian (strain 97-27)).